The sequence spans 215 residues: TLD domain-containing protein 2 (215 aa).

The tract at residues 1–46 (MRGLRWRYTRLPSQVEDTLSGEEGNEEEEEEEAAPDPAAAPEDPTV) is disordered. A compositionally biased stretch (acidic residues) spans 19–34 (LSGEEGNEEEEEEEAA). Positions 54–215 (QVLSASEIRQ…IQELEAWLLS (162 aa)) constitute a TLDc domain.

Belongs to the OXR1 family.

This Homo sapiens (Human) protein is TLD domain-containing protein 2 (TLDC2).